The following is a 179-amino-acid chain: Large ribosomal subunit protein uL6 (179 aa).

The protein belongs to the universal ribosomal protein uL6 family. Part of the 50S ribosomal subunit.

This protein binds to the 23S rRNA, and is important in its secondary structure. It is located near the subunit interface in the base of the L7/L12 stalk, and near the tRNA binding site of the peptidyltransferase center. The sequence is that of Large ribosomal subunit protein uL6 from Treponema pallidum (strain Nichols).